Consider the following 134-residue polypeptide: Profilin-2 (134 aa).

Cys-13 and Cys-118 are disulfide-bonded. Positions 84–100 match the Involved in PIP2 interaction motif; that stretch reads AVIRGKKGSGGITIKKT. Position 114 is a phosphothreonine (Thr-114).

Belongs to the profilin family. As to quaternary structure, occurs in many kinds of cells as a complex with monomeric actin in a 1:1 ratio. Phosphorylated by MAP kinases.

It is found in the cytoplasm. Its subcellular location is the cytoskeleton. Its function is as follows. Binds to actin and affects the structure of the cytoskeleton. At high concentrations, profilin prevents the polymerization of actin, whereas it enhances it at low concentrations. In Olea europaea (Common olive), this protein is Profilin-2.